A 510-amino-acid polypeptide reads, in one-letter code: Probable cytosol aminopeptidase (510 aa).

Positions 254 and 259 each coordinate Mn(2+). Lys-266 is a catalytic residue. Mn(2+)-binding residues include Asp-277, Asp-336, and Glu-338. Arg-340 is a catalytic residue. Residues 487 to 510 are disordered; the sequence is AQPVKASPKTRPARKSTPAAKTRA.

This sequence belongs to the peptidase M17 family. It depends on Mn(2+) as a cofactor.

It localises to the cytoplasm. It carries out the reaction Release of an N-terminal amino acid, Xaa-|-Yaa-, in which Xaa is preferably Leu, but may be other amino acids including Pro although not Arg or Lys, and Yaa may be Pro. Amino acid amides and methyl esters are also readily hydrolyzed, but rates on arylamides are exceedingly low.. The catalysed reaction is Release of an N-terminal amino acid, preferentially leucine, but not glutamic or aspartic acids.. Its function is as follows. Presumably involved in the processing and regular turnover of intracellular proteins. Catalyzes the removal of unsubstituted N-terminal amino acids from various peptides. The chain is Probable cytosol aminopeptidase from Polaromonas naphthalenivorans (strain CJ2).